The primary structure comprises 293 residues: MPMISILCSLFPPLLFPSLLAAFGASIAAGIIGSYIVVKRIVSISGSIAHSILGGVGIALWLQYQFNLPISPLHGAIASAIFVAICIGNVHLKYHEREDSIISMIWSIGMAIGIICISKLPSFNSELSDFLFGNILWVTPQDLYFLGILDLFIVATVSICHTRFLALCFDEKYMALNHYSIKTWYLLLLILTAITTVVLMYVMGVILMLSMLVLPVSIACRFSYKMSHIIYIASILNIVCSFLGIMLAYLLDLPVGPVIAILMGGAYSLSLLLKRSYNASTPSPVSPESKINS.

7 consecutive transmembrane segments (helical) span residues 18–38 (SLLA…YIVV), 41–61 (IVSI…IALW), 68–88 (LPIS…ICIG), 101–121 (IISM…SKLP), 135–155 (ILWV…FIVA), 187–207 (LLLI…GVIL), and 242–262 (FLGI…IAIL).

The protein belongs to the ABC-3 integral membrane protein family.

The protein localises to the cell inner membrane. Functionally, part of an ATP-driven transport system CT_415/CT_416/CT_417 for a metal. This chain is Probable metal transport system membrane protein CT_417, found in Chlamydia trachomatis serovar D (strain ATCC VR-885 / DSM 19411 / UW-3/Cx).